We begin with the raw amino-acid sequence, 520 residues long: Probable helicase MJECL08 (520 aa).

Residues arginine 162, glycine 171–asparagine 176, and lysine 501–isoleucine 502 contribute to the ATP site.

This sequence belongs to the HerA family.

It carries out the reaction Couples ATP hydrolysis with the unwinding of duplex DNA at the replication fork by translocating in the 5'-3' direction. This creates two antiparallel DNA single strands (ssDNA). The leading ssDNA polymer is the template for DNA polymerase III holoenzyme which synthesizes a continuous strand.. The enzyme catalyses ATP + H2O = ADP + phosphate + H(+). The catalysed reaction is Couples ATP hydrolysis with the unwinding of duplex DNA by translocating in the 3'-5' direction.. Functionally, a probably bidirectional DNA helicase. This chain is Probable helicase MJECL08, found in Methanocaldococcus jannaschii (strain ATCC 43067 / DSM 2661 / JAL-1 / JCM 10045 / NBRC 100440) (Methanococcus jannaschii).